We begin with the raw amino-acid sequence, 254 residues long: 5'-nucleotidase SurE (254 aa).

A divalent metal cation is bound by residues aspartate 8, aspartate 9, serine 39, and asparagine 91.

It belongs to the SurE nucleotidase family. The cofactor is a divalent metal cation.

Its subcellular location is the cytoplasm. The enzyme catalyses a ribonucleoside 5'-phosphate + H2O = a ribonucleoside + phosphate. Its function is as follows. Nucleotidase that shows phosphatase activity on nucleoside 5'-monophosphates. This Pseudoalteromonas translucida (strain TAC 125) protein is 5'-nucleotidase SurE.